A 151-amino-acid chain; its full sequence is Large ribosomal subunit protein uL13 (151 aa).

It belongs to the universal ribosomal protein uL13 family. In terms of assembly, part of the 50S ribosomal subunit.

This protein is one of the early assembly proteins of the 50S ribosomal subunit, although it is not seen to bind rRNA by itself. It is important during the early stages of 50S assembly. This is Large ribosomal subunit protein uL13 from Rippkaea orientalis (strain PCC 8801 / RF-1) (Cyanothece sp. (strain PCC 8801)).